We begin with the raw amino-acid sequence, 143 residues long: uncharacterized protein (143 aa).

The transit peptide at 1–38 (MKYWKYLSQLTIRRPLTYNNALLYRNRFPSILTWKRSA) directs the protein to the mitochondrion.

Its subcellular location is the mitochondrion. This is an uncharacterized protein from Schizosaccharomyces pombe (strain 972 / ATCC 24843) (Fission yeast).